We begin with the raw amino-acid sequence, 218 residues long: Structural protein V19 (218 aa).

The protein localises to the virion. This Sputnik virophage protein is Structural protein V19.